The sequence spans 364 residues: Dihydroflavonol 4-reductase (364 aa).

NADP(+) is bound by residues lysine 45 and tyrosine 164.

The protein belongs to the NAD(P)-dependent epimerase/dehydratase family. Dihydroflavonol-4-reductase subfamily.

It carries out the reaction a (2R,3S,4S)-leucoanthocyanidin + NADP(+) = a (2R,3R)-dihydroflavonol + NADPH + H(+). The catalysed reaction is (2S)-flavan-4-ol + NADP(+) = (2S)-flavanone + NADPH + H(+). Its pathway is pigment biosynthesis; anthocyanin biosynthesis. Its function is as follows. Bifunctional enzyme involved in flavonoid metabolism. In Callistephus chinensis (China aster), this protein is Dihydroflavonol 4-reductase (F).